Reading from the N-terminus, the 397-residue chain is Acetate kinase (397 aa).

Asn7 contacts Mg(2+). Lys14 contacts ATP. Arg91 serves as a coordination point for substrate. Residue Asp147 is the Proton donor/acceptor of the active site. Residues 207-211, 282-284, and 330-334 each bind ATP; these read HLGNG, DFR, and GLGEN. Position 383 (Glu383) interacts with Mg(2+).

It belongs to the acetokinase family. As to quaternary structure, homodimer. Requires Mg(2+) as cofactor. Mn(2+) serves as cofactor.

The protein localises to the cytoplasm. It carries out the reaction acetate + ATP = acetyl phosphate + ADP. It functions in the pathway metabolic intermediate biosynthesis; acetyl-CoA biosynthesis; acetyl-CoA from acetate: step 1/2. Its function is as follows. Catalyzes the formation of acetyl phosphate from acetate and ATP. Can also catalyze the reverse reaction. This chain is Acetate kinase, found in Moorella thermoacetica (strain ATCC 39073 / JCM 9320).